Here is a 120-residue protein sequence, read N- to C-terminus: Cell division topological specificity factor (120 aa).

Residues 93–120 (LNSCEGENPQQDPGAAPSEGGHLSSPSP) form a disordered region.

It belongs to the MinE family.

Functionally, prevents the cell division inhibition by proteins MinC and MinD at internal division sites while permitting inhibition at polar sites. This ensures cell division at the proper site by restricting the formation of a division septum at the midpoint of the long axis of the cell. The sequence is that of Cell division topological specificity factor from Synechococcus sp. (strain JA-3-3Ab) (Cyanobacteria bacterium Yellowstone A-Prime).